The primary structure comprises 430 residues: tRNA(Ile)-lysidine synthase (430 aa).

27–32 is a binding site for ATP; it reads SGGSDS.

The protein belongs to the tRNA(Ile)-lysidine synthase family.

The protein localises to the cytoplasm. The enzyme catalyses cytidine(34) in tRNA(Ile2) + L-lysine + ATP = lysidine(34) in tRNA(Ile2) + AMP + diphosphate + H(+). Ligates lysine onto the cytidine present at position 34 of the AUA codon-specific tRNA(Ile) that contains the anticodon CAU, in an ATP-dependent manner. Cytidine is converted to lysidine, thus changing the amino acid specificity of the tRNA from methionine to isoleucine. The polypeptide is tRNA(Ile)-lysidine synthase (Rickettsia akari (strain Hartford)).